Reading from the N-terminus, the 328-residue chain is D-cysteine desulfhydrase (328 aa).

At Lys-51 the chain carries N6-(pyridoxal phosphate)lysine.

It belongs to the ACC deaminase/D-cysteine desulfhydrase family. Homodimer. It depends on pyridoxal 5'-phosphate as a cofactor.

It carries out the reaction D-cysteine + H2O = hydrogen sulfide + pyruvate + NH4(+) + H(+). Its function is as follows. Catalyzes the alpha,beta-elimination reaction of D-cysteine and of several D-cysteine derivatives. It could be a defense mechanism against D-cysteine. The chain is D-cysteine desulfhydrase from Shigella sonnei (strain Ss046).